The following is a 248-amino-acid chain: MTSHPRDAPQFYLTAPSPCPYLPGQHERKVFTHLVGRRARDLNEILTQGGFRRSQTIAYRPACETCRACVSVRVVVGDFEPSASQRRVLKRNRDLVGQPQPNRPASEQYALFRRYLDARHGDGGMVDMTVLDYAMMVEDSHVETHLVVYRKRGPDTAINGRGVGAPIAVCLTDVLSDGLSMVYSFYEPSEADRSLGTFMILDHIERARLLGLPYLYLGYWVEGSRKMDYKAKFGPQERLMPQGWARVG.

It belongs to the R-transferase family. Bpt subfamily.

It is found in the cytoplasm. It carries out the reaction N-terminal L-glutamyl-[protein] + L-leucyl-tRNA(Leu) = N-terminal L-leucyl-L-glutamyl-[protein] + tRNA(Leu) + H(+). The enzyme catalyses N-terminal L-aspartyl-[protein] + L-leucyl-tRNA(Leu) = N-terminal L-leucyl-L-aspartyl-[protein] + tRNA(Leu) + H(+). Functionally, functions in the N-end rule pathway of protein degradation where it conjugates Leu from its aminoacyl-tRNA to the N-termini of proteins containing an N-terminal aspartate or glutamate. The sequence is that of Aspartate/glutamate leucyltransferase from Methylobacterium sp. (strain 4-46).